A 256-amino-acid chain; its full sequence is Fat body protein 2 (256 aa).

10–34 is a binding site for NAD(+); sequence VYVGSFSGIGWQMMMQLMQKDIKMM. Substrate is bound at residue serine 138. Tyrosine 151 functions as the Proton acceptor in the catalytic mechanism.

Belongs to the short-chain dehydrogenases/reductases (SDR) family.

This chain is Fat body protein 2 (Fbp2), found in Drosophila melanogaster (Fruit fly).